We begin with the raw amino-acid sequence, 465 residues long: Alpha-2A adrenergic receptor (465 aa).

Residues 1–48 (MFRQEQPLAEGSFAPMGSLQPDAGNSSWNGTEAPGGGTRATPYSLQVT) are Extracellular-facing. Residues Asn25 and Asn29 are each glycosylated (N-linked (GlcNAc...) asparagine). Residues 49–74 (LTLVCLAGLLMLFTVFGNVLVIIAVF) traverse the membrane as a helical segment. At 75 to 85 (TSRALKAPQNL) the chain is on the cytoplasmic side. The helical transmembrane segment at 86 to 111 (FLVSLASADILVATLVIPFSLANEVM) threads the bilayer. The Extracellular segment spans residues 112 to 121 (GYWYFGKVWC). An intrachain disulfide couples Cys121 to Cys203. Residues 122–144 (EIYLALDVLFCTSSIVHLCAISL) form a helical membrane-spanning segment. Topologically, residues 145-164 (DRYWSITQAIEYNLKRTPRR) are cytoplasmic. A helical transmembrane segment spans residues 165-188 (IKAIIVTVWVISAVISFPPLISIE). The Extracellular segment spans residues 189-207 (KKGAGGGQQPAEPSCKIND). The helical transmembrane segment at 208-232 (QKWYVISSSIGSFFAPCLIMILVYV) threads the bilayer. Topologically, residues 233–389 (RIYQIAKRRT…RQNREKRFTF (157 aa)) are cytoplasmic. Residues 242 to 378 (TRVPPSRRGP…GGGAKASRWR (137 aa)) form a disordered region. Residues 313-330 (SSEHAERPPGPRRPDRGP) show a composition bias toward basic and acidic residues. Ser346 carries the phosphoserine modification. The span at 353 to 363 (GAAGPGASGSG) shows a compositional bias: gly residues. Residue Arg368 is modified to Omega-N-methylarginine. A helical transmembrane segment spans residues 390–414 (VLAVVIGVFVVCWFPFFFTYTLIAV). The Extracellular segment spans residues 415–424 (GCPVPSQLFN). Residues 425-445 (FFFWFGYCNSSLNPVIYTIFN) form a helical membrane-spanning segment. Over 446 to 465 (HDFRRAFKKILCRGDRKRIV) the chain is Cytoplasmic. Cys457 is lipidated: S-palmitoyl cysteine.

It belongs to the G-protein coupled receptor 1 family. Adrenergic receptor subfamily. ADRA2A sub-subfamily.

The protein resides in the cell membrane. In terms of biological role, alpha-2 adrenergic receptors mediate the catecholamine-induced inhibition of adenylate cyclase through the action of G proteins. The sequence is that of Alpha-2A adrenergic receptor from Mus musculus (Mouse).